The chain runs to 400 residues: Multidrug resistance protein MdtH (400 aa).

10 helical membrane passes run 13–33 (YFLLLDNMLVVLGFFVVFPLI), 34–54 (SIRFVEQLGWAGVIVGFALGL), 99–116 (PWILWLSCILSALGGTLF), 139–159 (LLLMQDSAGAVIGALIGSWLL), 165–185 (LVCWVGAGIFVLAAIFNAWLL), 214–234 (VLTLTGYFVLSVQVMLMFPIV), 244–264 (AVKWMYAIEALLSLTLLYPIA), 289–309 (FPVGITHSLHAIFLIITLFYL), 340–360 (LGLAFGGAIGYTGGGWMYDIG), and 365–385 (LPELPWFLLGSIGFITLYALH).

The protein belongs to the major facilitator superfamily. DHA1 family. MdtH (TC 2.A.1.2.21) subfamily.

It localises to the cell inner membrane. The sequence is that of Multidrug resistance protein MdtH from Proteus mirabilis (strain HI4320).